The chain runs to 589 residues: Probable galacturonosyltransferase 6 (589 aa).

Topologically, residues 1–6 (MKQIRR) are cytoplasmic. The chain crosses the membrane as a helical; Signal-anchor for type II membrane protein span at residues 7–27 (WQRILILALLSISVFAPLIFV). Residues 28–589 (SNRLKSITPV…TYLQQCNLQA (562 aa)) are Lumenal-facing. Residues Asn-83 and Asn-126 are each glycosylated (N-linked (GlcNAc...) asparagine). A disordered region spans residues 127–151 (KTDFKPPLSKGEKNTRVQPDRATDV). Positions 136–151 (KGEKNTRVQPDRATDV) are enriched in basic and acidic residues. Residues Asn-317 and Asn-454 are each glycosylated (N-linked (GlcNAc...) asparagine).

Belongs to the glycosyltransferase 8 family. As to expression, expressed in roots, inflorescences, siliques, leaves and stems.

The protein localises to the golgi apparatus membrane. It functions in the pathway glycan metabolism; pectin biosynthesis. In terms of biological role, probably involved in pectin biosynthesis in cell walls. The protein is Probable galacturonosyltransferase 6 (GAUT6) of Arabidopsis thaliana (Mouse-ear cress).